Reading from the N-terminus, the 334-residue chain is Ornithine carbamoyltransferase (334 aa).

Residues 57-60 (STRT), Gln-84, Arg-108, and 135-138 (HPTQ) each bind carbamoyl phosphate. Residues Asn-168, Asp-232, and 236 to 237 (SM) contribute to the L-ornithine site. Residues 274-275 (CL) and Arg-321 each bind carbamoyl phosphate.

This sequence belongs to the aspartate/ornithine carbamoyltransferase superfamily. OTCase family.

Its subcellular location is the cytoplasm. It catalyses the reaction carbamoyl phosphate + L-ornithine = L-citrulline + phosphate + H(+). Its pathway is amino-acid biosynthesis; L-arginine biosynthesis; L-arginine from L-ornithine and carbamoyl phosphate: step 1/3. In terms of biological role, reversibly catalyzes the transfer of the carbamoyl group from carbamoyl phosphate (CP) to the N(epsilon) atom of ornithine (ORN) to produce L-citrulline. The chain is Ornithine carbamoyltransferase from Actinobacillus pleuropneumoniae serotype 5b (strain L20).